The following is a 523-amino-acid chain: Alanine aminotransferase 2 (523 aa).

The interval M1–S25 is disordered. Residues A187, S188, Y216, N271, and S338 each contribute to the pyridoxal 5'-phosphate site. Position 341 is an N6-(pyridoxal phosphate)lysine (K341). A pyridoxal 5'-phosphate-binding site is contributed by R350. N6-acetyllysine occurs at positions 415, 505, and 512.

It belongs to the class-I pyridoxal-phosphate-dependent aminotransferase family. Alanine aminotransferase subfamily. In terms of assembly, homodimer. The cofactor is pyridoxal 5'-phosphate. In terms of tissue distribution, expressed at high levels in muscle, adipose tissue, kidney and brain and at lower levels in the liver and breast.

It carries out the reaction L-alanine + 2-oxoglutarate = pyruvate + L-glutamate. The protein operates within amino-acid degradation; L-alanine degradation via transaminase pathway; pyruvate from L-alanine: step 1/1. Catalyzes the reversible transamination between alanine and 2-oxoglutarate to form pyruvate and glutamate. In Homo sapiens (Human), this protein is Alanine aminotransferase 2 (GPT2).